The following is a 965-amino-acid chain: UvrABC system protein A (965 aa).

32-39 (GLSGSGKS) is an ATP binding site. The C4-type zinc-finger motif lies at 254–281 (CPVCDYSLPELEPRLFSFNAPMGACPAC). ABC transporter domains are found at residues 311–588 (WDRR…PRSL) and 608–937 (PNAT…HFLA). Residue 641-648 (GVSGSGKS) coordinates ATP. The C4-type zinc finger occupies 740–766 (CEACEGDGLIKVEMHFLPDVYVPCDIC).

This sequence belongs to the ABC transporter superfamily. UvrA family. Forms a heterotetramer with UvrB during the search for lesions.

It is found in the cytoplasm. The UvrABC repair system catalyzes the recognition and processing of DNA lesions. UvrA is an ATPase and a DNA-binding protein. A damage recognition complex composed of 2 UvrA and 2 UvrB subunits scans DNA for abnormalities. When the presence of a lesion has been verified by UvrB, the UvrA molecules dissociate. In Xylella fastidiosa (strain Temecula1 / ATCC 700964), this protein is UvrABC system protein A.